The sequence spans 166 residues: Sperm-egg fusion protein TMEM95 (166 aa).

The first 16 residues, 1-16, serve as a signal peptide directing secretion; that stretch reads MWTLALGGIFLAAVEA. Cystine bridges form between C17–C118, C20–C121, C105–C128, and C109–C134. Residues 17 to 145 are Extracellular-facing; sequence CVFCRFPDRE…PGSHDLWEAR (129 aa). N-linked (GlcNAc...) asparagine glycosylation occurs at N117. Residues 146-165 form a helical membrane-spanning segment; sequence ILLLFVCGTALLLGVPSLAV. Position 166 (E166) is a topological domain, cytoplasmic.

It belongs to the TMEM95 family. Does not interact with sperm-egg fusion proteins IZUMO1 or IZUMO1R/JUNO. N-glycosylated. In terms of tissue distribution, detected in testis and brain with higher levels in brain than testis.

The protein resides in the cytoplasmic vesicle. Its subcellular location is the secretory vesicle. It is found in the acrosome membrane. Its function is as follows. Sperm protein required for fusion of sperm with the egg membrane during fertilization. The chain is Sperm-egg fusion protein TMEM95 from Bos taurus (Bovine).